The primary structure comprises 1093 residues: Probable phosphorylase b kinase regulatory subunit beta (1093 aa).

Residues 1–27 (MRDVPKSLGLSVTTPGGSSGAPDSGRH) are disordered. Calmodulin-binding regions lie at residues 6-27 (KSLGLSVTTPGGSSGAPDSGRH), 751-778 (QLYHRAGSLRYWRAVRYCSSLLHHIVDS), and 905-936 (EKLTTLQRRQLEGCLCRVPKHFYNKIWEILQR). Cysteine 1090 carries S-farnesyl cysteine lipidation.

It belongs to the phosphorylase b kinase regulatory chain family. Post-translationally, although the final Cys may be farnesylated, the terminal tripeptide is probably not removed, and the C-terminus is not methylated.

It localises to the cell membrane. Its pathway is glycan biosynthesis; glycogen metabolism. Phosphorylase b kinase catalyzes the phosphorylation of serine in certain substrates, including troponin I. The beta chain acts as a regulatory unit and modulates the activity of the holoenzyme in response to phosphorylation. This chain is Probable phosphorylase b kinase regulatory subunit beta, found in Drosophila melanogaster (Fruit fly).